Consider the following 306-residue polypeptide: 2-phospho-L-lactate transferase (306 aa).

Positions 54 and 93 each coordinate 7,8-didemethyl-8-hydroxy-5-deazariboflavin.

Belongs to the CofD family. As to quaternary structure, homodimer. Mg(2+) is required as a cofactor.

It catalyses the reaction (2S)-lactyl-2-diphospho-5'-guanosine + 7,8-didemethyl-8-hydroxy-5-deazariboflavin = oxidized coenzyme F420-0 + GMP + H(+). The protein operates within cofactor biosynthesis; coenzyme F420 biosynthesis. In terms of biological role, catalyzes the transfer of the 2-phospholactate moiety from (2S)-lactyl-2-diphospho-5'-guanosine to 7,8-didemethyl-8-hydroxy-5-deazariboflavin (FO) with the formation of oxidized coenzyme F420-0 and GMP. This chain is 2-phospho-L-lactate transferase, found in Methanothermobacter thermautotrophicus (strain ATCC 29096 / DSM 1053 / JCM 10044 / NBRC 100330 / Delta H) (Methanobacterium thermoautotrophicum).